A 68-amino-acid polypeptide reads, in one-letter code: Small ribosomal subunit protein bS21 (68 aa).

The protein belongs to the bacterial ribosomal protein bS21 family.

The chain is Small ribosomal subunit protein bS21 from Ruegeria sp. (strain TM1040) (Silicibacter sp.).